Consider the following 107-residue polypeptide: Protein Asterix (107 aa).

The segment covering 1-15 has biased composition (polar residues); the sequence is MSHSHGNASSVNDPR. Residues 1 to 25 form a disordered region; it reads MSHSHGNASSVNDPRQPSAAKPYIP. Residues 82–98 traverse the membrane as a helical segment; that stretch reads ISMAMMFAIMGLVTNYL.

This sequence belongs to the Asterix family.

The protein resides in the membrane. This is Protein Asterix from Arabidopsis thaliana (Mouse-ear cress).